The primary structure comprises 48 residues: Toxin CSTX-15 (48 aa).

4 disulfides stabilise this stretch: C3–C18, C10–C27, C17–C42, and C29–C40.

It belongs to the neurotoxin 19 (CSTX) family. 12 subfamily. Heterodimer of A and B chains; disulfide-linked. In terms of processing, contains 4 disulfide bonds. Expressed by the venom gland.

It is found in the secreted. This chain is Toxin CSTX-15, found in Cupiennius salei (American wandering spider).